Consider the following 131-residue polypeptide: ATP synthase epsilon chain (131 aa).

This sequence belongs to the ATPase epsilon chain family. In terms of assembly, F-type ATPases have 2 components, CF(1) - the catalytic core - and CF(0) - the membrane proton channel. CF(1) has five subunits: alpha(3), beta(3), gamma(1), delta(1), epsilon(1). CF(0) has three main subunits: a, b and c.

Its subcellular location is the cell membrane. Produces ATP from ADP in the presence of a proton gradient across the membrane. This Clostridium novyi (strain NT) protein is ATP synthase epsilon chain.